The chain runs to 415 residues: MARNRMGGALICSFCNKPESSERFVVPGPGGIAICDRCVDLCESYIKSYKTVRPVDRSGAIPTPQELKEYLDEYVIGQEQAKRVLSVAVYNHYKRIMNPPLENDVVIEKSNVLLLGPTGSGKTLLAKTLAQKMQVPFAIADATTLTEAGYVGEDVENILLKLIQNANGDIKEAEMGIIFIDEIDKISRKSENVSITRDVSGEGVQQALLKIIEGTSASVPPQGGRKHPNQDMLKIDTTNILFICGGAFVGLDKIVEARISTKPIGFGAEVKKLSEKNLTELYDQVSPDDLVKFGLIPELIGRIPIKVALNELTKEDLTRILVEPKNAIIKQFQATFKLDNVDLHFDKDAITAIAQQAIDQNTGARGLRSIVEKLMLDAMFEAPSIKGRKELIINKKMIGNSSSKPKIKLLDEKTA.

One can recognise a ClpX-type ZB domain in the interval 1 to 54; the sequence is MARNRMGGALICSFCNKPESSERFVVPGPGGIAICDRCVDLCESYIKSYKTVRP. Zn(2+) contacts are provided by Cys12, Cys15, Cys35, and Cys38. 117 to 124 provides a ligand contact to ATP; sequence PTGSGKTL.

It belongs to the ClpX chaperone family. In terms of assembly, component of the ClpX-ClpP complex. Forms a hexameric ring that, in the presence of ATP, binds to fourteen ClpP subunits assembled into a disk-like structure with a central cavity, resembling the structure of eukaryotic proteasomes.

Functionally, ATP-dependent specificity component of the Clp protease. It directs the protease to specific substrates. Can perform chaperone functions in the absence of ClpP. This Treponema denticola (strain ATCC 35405 / DSM 14222 / CIP 103919 / JCM 8153 / KCTC 15104) protein is ATP-dependent Clp protease ATP-binding subunit ClpX.